The following is a 1337-amino-acid chain: ATP-dependent helicase/nuclease subunit A (1337 aa).

A UvrD-like helicase ATP-binding domain is found at 3-484; that stretch reads FTPSKEQEPA…LDLSDNYRSR (482 aa). 24–31 is a binding site for ATP; it reads ASAGSGKT. The 346-residue stretch at 522-867 folds into the UvrD-like helicase C-terminal domain; sequence ADRDQASPAT…NVMTIHKSKG (346 aa).

The protein belongs to the helicase family. AddA subfamily. In terms of assembly, heterodimer of AddA and AddB/RexB. Requires Mg(2+) as cofactor.

The enzyme catalyses Couples ATP hydrolysis with the unwinding of duplex DNA by translocating in the 3'-5' direction.. The catalysed reaction is ATP + H2O = ADP + phosphate + H(+). Its function is as follows. The heterodimer acts as both an ATP-dependent DNA helicase and an ATP-dependent, dual-direction single-stranded exonuclease. Recognizes the chi site generating a DNA molecule suitable for the initiation of homologous recombination. The AddA nuclease domain is required for chi fragment generation; this subunit has the helicase and 3' -&gt; 5' nuclease activities. This Limosilactobacillus fermentum (strain NBRC 3956 / LMG 18251) (Lactobacillus fermentum) protein is ATP-dependent helicase/nuclease subunit A.